The following is a 78-amino-acid chain: MVTNLYQNMRANALADAELRRKAADELTCMTARINRGETIPEPVKQLPVMGGRPLNRAQALAKIAEIKAKFGLKGASV.

The protein belongs to the phage P protein family.

This is Putative protein PeaD (peaD) from Escherichia coli (strain K12).